Reading from the N-terminus, the 142-residue chain is Large ribosomal subunit protein uL11 (142 aa).

Belongs to the universal ribosomal protein uL11 family. As to quaternary structure, part of the ribosomal stalk of the 50S ribosomal subunit. Interacts with L10 and the large rRNA to form the base of the stalk. L10 forms an elongated spine to which L12 dimers bind in a sequential fashion forming a multimeric L10(L12)X complex. In terms of processing, one or more lysine residues are methylated.

Its function is as follows. Forms part of the ribosomal stalk which helps the ribosome interact with GTP-bound translation factors. This Colwellia psychrerythraea (strain 34H / ATCC BAA-681) (Vibrio psychroerythus) protein is Large ribosomal subunit protein uL11.